The primary structure comprises 998 residues: Bifunctional glutamine synthetase adenylyltransferase/adenylyl-removing enzyme (998 aa).

Positions 1 to 487 (MVVTKPATQR…LHAKLFYQPL (487 aa)) are adenylyl removase. The adenylyl transferase stretch occupies residues 492 to 998 (GPAGLEIRHG…KAVVCKVFGS (507 aa)).

It belongs to the GlnE family. It depends on Mg(2+) as a cofactor.

It catalyses the reaction [glutamine synthetase]-O(4)-(5'-adenylyl)-L-tyrosine + phosphate = [glutamine synthetase]-L-tyrosine + ADP. The enzyme catalyses [glutamine synthetase]-L-tyrosine + ATP = [glutamine synthetase]-O(4)-(5'-adenylyl)-L-tyrosine + diphosphate. In terms of biological role, involved in the regulation of glutamine synthetase GlnA, a key enzyme in the process to assimilate ammonia. When cellular nitrogen levels are high, the C-terminal adenylyl transferase (AT) inactivates GlnA by covalent transfer of an adenylyl group from ATP to specific tyrosine residue of GlnA, thus reducing its activity. Conversely, when nitrogen levels are low, the N-terminal adenylyl removase (AR) activates GlnA by removing the adenylyl group by phosphorolysis, increasing its activity. The regulatory region of GlnE binds the signal transduction protein PII (GlnB) which indicates the nitrogen status of the cell. This chain is Bifunctional glutamine synthetase adenylyltransferase/adenylyl-removing enzyme, found in Mycolicibacterium paratuberculosis (strain ATCC BAA-968 / K-10) (Mycobacterium paratuberculosis).